A 735-amino-acid polypeptide reads, in one-letter code: Alpha-adducin (735 aa).

N-acetylmethionine is present on M1. Positions 1-11 (MNGDTRAAVVT) are enriched in low complexity. The interval 1–21 (MNGDTRAAVVTSPPPTTAPHK) is disordered. S12, S59, and S64 each carry phosphoserine. At T331 the chain carries Phosphothreonine. Phosphoserine is present on residues S334, S353, and S355. The residue at position 358 (T358) is a Phosphothreonine. Phosphoserine is present on residues S364, S366, S408, and S427. Disordered regions lie at residues 418 to 487 (GHSF…AVPN) and 576 to 735 (RREV…KSDS). Residue T429 is modified to Phosphothreonine. S431 and S436 each carry phosphoserine. The span at 440 to 455 (QQREKTRWLHSGRGDD) shows a compositional bias: basic and acidic residues. Position 445 is a phosphothreonine; by ROCK2 (T445). 2 positions are modified to phosphoserine: S464 and S465. T480 is subject to Phosphothreonine; by ROCK2. Position 481 is a phosphoserine; by PKA (S481). The span at 576–601 (RREVERKQKGSEENLDETREQKEKSP) shows a compositional bias: basic and acidic residues. Phosphoserine occurs at positions 586, 600, and 605. A Phosphothreonine modification is found at T610. The residue at position 613 (S613) is a Phosphoserine. T614 bears the Phosphothreonine mark. The segment covering 698 to 712 (GSPMDPGSDGSPGKS) has biased composition (low complexity). 3 positions are modified to phosphoserine: S705, S708, and S712. The span at 713–735 (PSKKKKKFRTPSFLKKSKKKSDS) shows a compositional bias: basic residues. S714 bears the Phosphoserine; by PKC mark. An interaction with calmodulin region spans residues 715–732 (KKKKKFRTPSFLKKSKKK). S724 is modified (phosphoserine; by PKA and PKC).

It belongs to the aldolase class II family. Adducin subfamily. In terms of assembly, heterodimer of an alpha and a beta subunit or an alpha and a gamma subunit.

The protein resides in the cytoplasm. The protein localises to the cytoskeleton. It is found in the cell membrane. Functionally, membrane-cytoskeleton-associated protein that promotes the assembly of the spectrin-actin network. Binds to calmodulin. In Mus musculus (Mouse), this protein is Alpha-adducin (Add1).